We begin with the raw amino-acid sequence, 1154 residues long: BEACH domain-containing protein lvsF (1154 aa).

Disordered regions lie at residues H92–S123 and T139–T167. Pro residues predominate over residues P145–Q158. The BEACH-type PH domain maps to D289–V384. The 309-residue stretch at T389–R697 folds into the BEACH domain. Disordered stretches follow at residues S554–N575, N739–N762, and N779–N825. Composition is skewed to low complexity over residues N779–N788 and N795–E822. WD repeat units lie at residues L858–S897, L900–S939, G942–I980, D992–R1031, C1034–K1074, K1076–D1110, and S1119–Q1154.

This chain is BEACH domain-containing protein lvsF (lvsF), found in Dictyostelium discoideum (Social amoeba).